A 456-amino-acid chain; its full sequence is UDP-N-acetylglucosamine 1-carboxyvinyltransferase (456 aa).

Residue 34–35 coordinates phosphoenolpyruvate; it reads KN. Residue R104 coordinates UDP-N-acetyl-alpha-D-glucosamine. C128 acts as the Proton donor in catalysis. C128 is modified (2-(S-cysteinyl)pyruvic acid O-phosphothioketal). Residues D319 and I341 each contribute to the UDP-N-acetyl-alpha-D-glucosamine site.

Belongs to the EPSP synthase family. MurA subfamily.

The protein localises to the cytoplasm. The catalysed reaction is phosphoenolpyruvate + UDP-N-acetyl-alpha-D-glucosamine = UDP-N-acetyl-3-O-(1-carboxyvinyl)-alpha-D-glucosamine + phosphate. It functions in the pathway cell wall biogenesis; peptidoglycan biosynthesis. In terms of biological role, cell wall formation. Adds enolpyruvyl to UDP-N-acetylglucosamine. This Prochlorococcus marinus (strain MIT 9301) protein is UDP-N-acetylglucosamine 1-carboxyvinyltransferase.